The primary structure comprises 310 residues: N-acetyl-gamma-glutamyl-phosphate reductase (310 aa).

The active site involves Cys-117.

It belongs to the NAGSA dehydrogenase family. Type 2 subfamily.

The protein localises to the cytoplasm. The enzyme catalyses N-acetyl-L-glutamate 5-semialdehyde + phosphate + NADP(+) = N-acetyl-L-glutamyl 5-phosphate + NADPH + H(+). It participates in amino-acid biosynthesis; L-arginine biosynthesis; N(2)-acetyl-L-ornithine from L-glutamate: step 3/4. Catalyzes the NADPH-dependent reduction of N-acetyl-5-glutamyl phosphate to yield N-acetyl-L-glutamate 5-semialdehyde. The polypeptide is N-acetyl-gamma-glutamyl-phosphate reductase (Rhizobium etli (strain ATCC 51251 / DSM 11541 / JCM 21823 / NBRC 15573 / CFN 42)).